We begin with the raw amino-acid sequence, 283 residues long: Diaminopimelate epimerase (283 aa).

3 residues coordinate substrate: Asn-13, Gln-45, and Asn-65. The Proton donor role is filled by Cys-74. Substrate is bound by residues 75-76 (GN), Asn-156, Asn-190, and 208-209 (ER). Cys-217 functions as the Proton acceptor in the catalytic mechanism. 218–219 (GS) contacts substrate.

It belongs to the diaminopimelate epimerase family. As to quaternary structure, homodimer.

It localises to the cytoplasm. It catalyses the reaction (2S,6S)-2,6-diaminopimelate = meso-2,6-diaminopimelate. It participates in amino-acid biosynthesis; L-lysine biosynthesis via DAP pathway; DL-2,6-diaminopimelate from LL-2,6-diaminopimelate: step 1/1. Catalyzes the stereoinversion of LL-2,6-diaminopimelate (L,L-DAP) to meso-diaminopimelate (meso-DAP), a precursor of L-lysine and an essential component of the bacterial peptidoglycan. The polypeptide is Diaminopimelate epimerase (Bartonella henselae (strain ATCC 49882 / DSM 28221 / CCUG 30454 / Houston 1) (Rochalimaea henselae)).